The following is a 186-amino-acid chain: Ribosome-recycling factor (186 aa).

The protein belongs to the RRF family.

It localises to the cytoplasm. Responsible for the release of ribosomes from messenger RNA at the termination of protein biosynthesis. May increase the efficiency of translation by recycling ribosomes from one round of translation to another. In Ralstonia nicotianae (strain ATCC BAA-1114 / GMI1000) (Ralstonia solanacearum), this protein is Ribosome-recycling factor.